Consider the following 116-residue polypeptide: Large ribosomal subunit protein uL18 (116 aa).

The protein belongs to the universal ribosomal protein uL18 family. In terms of assembly, part of the 50S ribosomal subunit; part of the 5S rRNA/L5/L18/L25 subcomplex. Contacts the 5S and 23S rRNAs.

Functionally, this is one of the proteins that bind and probably mediate the attachment of the 5S RNA into the large ribosomal subunit, where it forms part of the central protuberance. The chain is Large ribosomal subunit protein uL18 from Acholeplasma laidlawii (strain PG-8A).